The chain runs to 201 residues: E3 ubiquitin-protein ligase MIR1 (201 aa).

An RING-CH-type zinc finger spans residues 1–58 (MDSTGEFCWICHQPEGPLKRFCGCKGSCAVSHQDCLRGWLETSRRQTCALCGTPYSMK). At 1–81 (MDSTGEFCWI…EEVLAAMEAC (81 aa)) the chain is on the cytoplasmic side. Residues cysteine 8, cysteine 11, cysteine 22, cysteine 24, histidine 32, cysteine 35, cysteine 48, and cysteine 51 each coordinate Zn(2+). A DIRT region spans residues 52–79 (GTPYSMKWKTKPLREWTWGEEEVLAAME). The chain crosses the membrane as a helical span at residues 82-102 (LPLVLIPLAVLMIVMGTWLLV). Over 103–113 (NHNGFLSPRMQ) the chain is Extracellular. A helical membrane pass occupies residues 114 to 134 (VVLVVIVLLAMIVFSASASYV). The Cytoplasmic portion of the chain corresponds to 135–201 (MVEGPGCLDT…RLGCVRLCCV (67 aa)).

Interacts with host UBE2J2.

It is found in the host endoplasmic reticulum membrane. The enzyme catalyses [E2 ubiquitin-conjugating enzyme]-S-ubiquitinyl-L-cysteine + [acceptor protein]-L-cysteine = [E2 ubiquitin-conjugating enzyme]-L-cysteine + [acceptor protein]-S-ubiquitinyl-L-cysteine.. It participates in protein modification; protein ubiquitination. In terms of biological role, E3 ubiquitin-protein ligase that mediates ubiquitination of host surface class I (MHC-I) H-2D(b)/H2-D1 and H-2K(b)/H2-K1 molecules before they exit the endoplasmic reticulum, leading to their degradation by the endoplasmic reticulum-associated degradation (ERAD) system, thus blocking the immune detection of virus-infected cells. Mediates ubiquitination of lysine, as well as serine and threonine residues present in the cytoplasmic tail of surface class I molecules. Promotes ubiquitination of hydroxylated serine or threonine residues via ester bonds instead of the classical isopeptide linkage. The polypeptide is E3 ubiquitin-protein ligase MIR1 (K3) (Murid herpesvirus 4 (MuHV-4)).